The sequence spans 484 residues: Arginine ADP-riboxanase OspC3 (484 aa).

NAD(+) is bound by residues His-143, Gln-144, Ser-145, Asn-155, Lys-157, Thr-169, Asn-172, and Thr-173. Residue Glu-326 is part of the active site. ANK repeat units lie at residues 369 to 398 (MAHQALAYSLGNKKADIALYLLSKFNFTKQ), 413 to 444 (NLYDVEYLLSKDGANYKVLEYFINNGLVDVNK), and 451 to 480 (SGDTMLDNAMKSKDSKMIDFLLKNGAILGK).

Belongs to the OspC family. In terms of assembly, interacts with host calmodulin (CALM1, CALM2 and/or CALM3); specifically interacts with the apo form of calmodulin, preventing calcium-binding.

It localises to the secreted. The protein localises to the host cytoplasm. It catalyses the reaction L-arginyl-[protein] + NAD(+) = ADP-riboxanated L-argininyl-[protein] + nicotinamide + NH4(+) + H(+). Interaction with host calmodulin (CALM1, CALM2 and/or CALM3) is required to mediate arginine ADP-riboxanation of host caspases. In terms of biological role, ADP-riboxanase effector that inhibits host cell pyroptosis. Acts by mediating arginine ADP-riboxanation of host CASP4/CASP11, blocking CASP4/CASP11 autoprocessing. This prevents CASP4 activation and ability to recognize and cleave GSDMD, thereby inhibiting LPS-induced pyroptosis. ADP-riboxanation takes place in two steps: OspC3 first catalyzes ADP-ribosylation of target Arg, and then initiates a deamination to remove one N-omega group. Independently of its ADP-riboxanase activity, acts as an inhibitor of calcium signaling by inhibiting host calmodulin, preventing activation of the JAK-STAT signaling pathway in response to interferon-beta. Mechanistically, acts by binding to the apo form of calmodulin, preventing calcium-binding and ability to activate host CaMK2 (CAMKII), which is required to stimulate the JAK-STAT signaling pathway in response to interferon-beta. This chain is Arginine ADP-riboxanase OspC3, found in Shigella flexneri.